Here is a 473-residue protein sequence, read N- to C-terminus: ATP synthase subunit beta, chloroplastic (473 aa).

172 to 179 (GGAGVGKT) contacts ATP.

The protein belongs to the ATPase alpha/beta chains family. F-type ATPases have 2 components, CF(1) - the catalytic core - and CF(0) - the membrane proton channel. CF(1) has five subunits: alpha(3), beta(3), gamma(1), delta(1), epsilon(1). CF(0) has four main subunits: a(1), b(1), b'(1) and c(9-12).

Its subcellular location is the plastid. The protein resides in the chloroplast thylakoid membrane. The catalysed reaction is ATP + H2O + 4 H(+)(in) = ADP + phosphate + 5 H(+)(out). Functionally, produces ATP from ADP in the presence of a proton gradient across the membrane. The catalytic sites are hosted primarily by the beta subunits. The protein is ATP synthase subunit beta, chloroplastic of Equisetum arvense (Field horsetail).